Reading from the N-terminus, the 254-residue chain is Thiazole synthase (254 aa).

Lys-95 functions as the Schiff-base intermediate with DXP in the catalytic mechanism. 1-deoxy-D-xylulose 5-phosphate-binding positions include Gly-156, 182–183, and 204–205; these read AG and NT.

This sequence belongs to the ThiG family. In terms of assembly, homotetramer. Forms heterodimers with either ThiH or ThiS.

It localises to the cytoplasm. The catalysed reaction is [ThiS sulfur-carrier protein]-C-terminal-Gly-aminoethanethioate + 2-iminoacetate + 1-deoxy-D-xylulose 5-phosphate = [ThiS sulfur-carrier protein]-C-terminal Gly-Gly + 2-[(2R,5Z)-2-carboxy-4-methylthiazol-5(2H)-ylidene]ethyl phosphate + 2 H2O + H(+). It participates in cofactor biosynthesis; thiamine diphosphate biosynthesis. In terms of biological role, catalyzes the rearrangement of 1-deoxy-D-xylulose 5-phosphate (DXP) to produce the thiazole phosphate moiety of thiamine. Sulfur is provided by the thiocarboxylate moiety of the carrier protein ThiS. In vitro, sulfur can be provided by H(2)S. The sequence is that of Thiazole synthase from Vibrio atlanticus (strain LGP32) (Vibrio splendidus (strain Mel32)).